The following is a 249-amino-acid chain: Triosephosphate isomerase (249 aa).

Position 9-11 (9-11 (NWK)) interacts with substrate. H94 functions as the Electrophile in the catalytic mechanism. E166 serves as the catalytic Proton acceptor. Substrate is bound by residues G172, S212, and 233 to 234 (GG).

This sequence belongs to the triosephosphate isomerase family. As to quaternary structure, homodimer.

The protein localises to the cytoplasm. It catalyses the reaction D-glyceraldehyde 3-phosphate = dihydroxyacetone phosphate. It participates in carbohydrate biosynthesis; gluconeogenesis. Its pathway is carbohydrate degradation; glycolysis; D-glyceraldehyde 3-phosphate from glycerone phosphate: step 1/1. Involved in the gluconeogenesis. Catalyzes stereospecifically the conversion of dihydroxyacetone phosphate (DHAP) to D-glyceraldehyde-3-phosphate (G3P). The polypeptide is Triosephosphate isomerase (Treponema pallidum (strain Nichols)).